The following is a 99-amino-acid chain: Cell division protein FtsB (99 aa).

Topologically, residues Met-1 to Phe-3 are cytoplasmic. A helical transmembrane segment spans residues Phe-4 to Ser-21. At Gly-22 to Gln-99 the chain is on the periplasmic side. Positions Ile-36–Asn-73 form a coiled coil.

It belongs to the FtsB family. Part of a complex composed of FtsB, FtsL and FtsQ.

The protein resides in the cell inner membrane. Essential cell division protein. May link together the upstream cell division proteins, which are predominantly cytoplasmic, with the downstream cell division proteins, which are predominantly periplasmic. This is Cell division protein FtsB from Shewanella sp. (strain W3-18-1).